Here is a 328-residue protein sequence, read N- to C-terminus: 4-hydroxy-3-methylbut-2-enyl diphosphate reductase (328 aa).

Residue Cys-13 coordinates [4Fe-4S] cluster. Residues His-41 and His-75 each contribute to the (2E)-4-hydroxy-3-methylbut-2-enyl diphosphate site. Dimethylallyl diphosphate-binding residues include His-41 and His-75. His-41 and His-75 together coordinate isopentenyl diphosphate. Residue Cys-97 participates in [4Fe-4S] cluster binding. His-125 serves as a coordination point for (2E)-4-hydroxy-3-methylbut-2-enyl diphosphate. His-125 is a dimethylallyl diphosphate binding site. His-125 is an isopentenyl diphosphate binding site. Glu-127 serves as the catalytic Proton donor. Thr-168 lines the (2E)-4-hydroxy-3-methylbut-2-enyl diphosphate pocket. Residue Cys-225 participates in [4Fe-4S] cluster binding. Residues Ser-253, Ser-254, Asn-255, and Ser-302 each contribute to the (2E)-4-hydroxy-3-methylbut-2-enyl diphosphate site. Dimethylallyl diphosphate contacts are provided by Ser-253, Ser-254, Asn-255, and Ser-302. Isopentenyl diphosphate is bound by residues Ser-253, Ser-254, Asn-255, and Ser-302.

Belongs to the IspH family. [4Fe-4S] cluster is required as a cofactor.

The catalysed reaction is isopentenyl diphosphate + 2 oxidized [2Fe-2S]-[ferredoxin] + H2O = (2E)-4-hydroxy-3-methylbut-2-enyl diphosphate + 2 reduced [2Fe-2S]-[ferredoxin] + 2 H(+). It catalyses the reaction dimethylallyl diphosphate + 2 oxidized [2Fe-2S]-[ferredoxin] + H2O = (2E)-4-hydroxy-3-methylbut-2-enyl diphosphate + 2 reduced [2Fe-2S]-[ferredoxin] + 2 H(+). It participates in isoprenoid biosynthesis; dimethylallyl diphosphate biosynthesis; dimethylallyl diphosphate from (2E)-4-hydroxy-3-methylbutenyl diphosphate: step 1/1. The protein operates within isoprenoid biosynthesis; isopentenyl diphosphate biosynthesis via DXP pathway; isopentenyl diphosphate from 1-deoxy-D-xylulose 5-phosphate: step 6/6. Catalyzes the conversion of 1-hydroxy-2-methyl-2-(E)-butenyl 4-diphosphate (HMBPP) into a mixture of isopentenyl diphosphate (IPP) and dimethylallyl diphosphate (DMAPP). Acts in the terminal step of the DOXP/MEP pathway for isoprenoid precursor biosynthesis. This chain is 4-hydroxy-3-methylbut-2-enyl diphosphate reductase, found in Chlorobium chlorochromatii (strain CaD3).